The chain runs to 387 residues: 3-ketoacyl-CoA thiolase (387 aa).

Cys-91 serves as the catalytic Acyl-thioester intermediate. Residues His-343 and Cys-373 each act as proton acceptor in the active site.

Belongs to the thiolase-like superfamily. Thiolase family. As to quaternary structure, heterotetramer of two alpha chains (FadB) and two beta chains (FadA).

The protein resides in the cytoplasm. It carries out the reaction an acyl-CoA + acetyl-CoA = a 3-oxoacyl-CoA + CoA. It functions in the pathway lipid metabolism; fatty acid beta-oxidation. Its function is as follows. Catalyzes the final step of fatty acid oxidation in which acetyl-CoA is released and the CoA ester of a fatty acid two carbons shorter is formed. The polypeptide is 3-ketoacyl-CoA thiolase (Yersinia enterocolitica serotype O:8 / biotype 1B (strain NCTC 13174 / 8081)).